A 436-amino-acid chain; its full sequence is Bifunctional IPC transferase and DIPP synthase (436 aa).

The segment at 11 to 241 (GVGAAVLAAG…LSEEMVLGWA (231 aa)) is mobA-like NTP transferase. CTP-binding positions include 17 to 19 (LAA) and lysine 32. The interval 242-435 (ASGNDGPVSR…RRLLALKRGR (194 aa)) is CDP-alcohol phosphatidyltransferases. Helical transmembrane passes span 275–295 (VSLLSFALAALGAGLLAAGRL), 349–371 (AGTRLAAAAGYPALAGALLVSYT), and 397–417 (LAVLALGGLLGAPGAALLATG).

In the N-terminal section; belongs to the MobA family. This sequence in the C-terminal section; belongs to the CDP-alcohol phosphatidyltransferase class-I family.

It is found in the membrane. The catalysed reaction is 1D-myo-inositol 3-phosphate + CTP + H(+) = CDP-1L-myo-inositol + diphosphate. It catalyses the reaction CDP-1L-myo-inositol + 1D-myo-inositol 3-phosphate = bis(1L-myo-inositol) 3,1'-phosphate 1-phosphate + CMP + H(+). Its function is as follows. Involved in biosynthesis of di-myo-inositol phosphate (DIP), a widespread organic solute in microorganisms adapted to hot environments. Catalyzes the condensation of CTP and L-myo-inositol-1-phosphate into CDP-L-myo-inositol, as well as the biosynthesis of di-myo-inositol-1,3'-phosphate-1'-phosphate (DIPP) from CDP-L-myo-inositol and L-myo-inositol-1-phosphate. This is Bifunctional IPC transferase and DIPP synthase from Rubrobacter xylanophilus (strain DSM 9941 / JCM 11954 / NBRC 16129 / PRD-1).